A 207-amino-acid polypeptide reads, in one-letter code: SPRY domain-containing protein 4 (207 aa).

The B30.2/SPRY domain maps to 12–206; it reads CRWGAKRLGV…THSGLEVPEG (195 aa). Residues K53 and K130 each carry the N6-acetyllysine modification. K139 bears the N6-succinyllysine mark.

This chain is SPRY domain-containing protein 4 (SPRYD4), found in Homo sapiens (Human).